The sequence spans 513 residues: Ribonuclease Y (513 aa).

The helical transmembrane segment at 6–26 threads the bilayer; it reads YIIIAVVIIIICVILGLYVVD. The region spanning 203–288 is the KH domain; the sequence is TVHVVNLPND…EMVEKAKKEV (86 aa). Residues 329–422 enclose the HD domain; the sequence is VLKHSIEVSH…VQAADAISAA (94 aa).

This sequence belongs to the RNase Y family.

The protein localises to the cell membrane. Functionally, endoribonuclease that initiates mRNA decay. This Clostridium botulinum (strain Langeland / NCTC 10281 / Type F) protein is Ribonuclease Y.